The following is a 305-amino-acid chain: Serine/threonine-protein phosphatase 6 catalytic subunit (305 aa).

Residues D54, H56, D82, and N114 each contribute to the Mn(2+) site. The active-site Proton donor is the H115. H164 and H238 together coordinate Mn(2+).

Belongs to the PPP phosphatase family. PP-6 (PP-V) subfamily. Mn(2+) is required as a cofactor.

The enzyme catalyses O-phospho-L-seryl-[protein] + H2O = L-seryl-[protein] + phosphate. The catalysed reaction is O-phospho-L-threonyl-[protein] + H2O = L-threonyl-[protein] + phosphate. This chain is Serine/threonine-protein phosphatase 6 catalytic subunit (ppp6c), found in Dictyostelium discoideum (Social amoeba).